The sequence spans 1582 residues: Sca1 complex scaffold protein scaA (1582 aa).

Low complexity-rich tracts occupy residues 1–14 (MSSL…TPST) and 109–131 (LSPS…TTST). Disordered regions lie at residues 1-22 (MSSL…TFSK) and 108-147 (GLSP…QIKK). The stretch at 4–37 (LDPSLSTTPSTNRRGTFSKAKSFRRAALNLEPQG) is one TPR 1 repeat. A TPR 2 repeat occupies 166–199 (IYTSFPESMAFDDYMDYEESLVEWKRQVEQNLGI). The tract at residues 246-349 (IKETNSSVND…PSTGSLAGFV (104 aa)) is disordered. 3 stretches are compositionally biased toward polar residues: residues 249–267 (TNSS…PTLR), 288–310 (NKDN…NSGI), and 318–332 (SDTS…QLDG). The residue at position 359 (S359) is a Phosphoserine; by PKB. The segment at 400 to 600 (RSGSGFGMDH…QRQTSTWFRG (201 aa)) is gefA and gefH binding. Disordered stretches follow at residues 468–493 (PKNS…GVGG) and 686–734 (SLSS…DKDK). 2 stretches are compositionally biased toward gly residues: residues 478–493 (GSGG…GVGG) and 694–714 (QQQG…GSGS). The segment covering 715-726 (GLNMSGTSGSSG) has biased composition (low complexity). A TPR 3 repeat occupies 742–777 (MHSINNTTNVGTKEDRRQYTKILQTYEQRLQFSFRL). Gly residues predominate over residues 864–875 (GGGSGGASGGGI). The disordered stretch occupies residues 864-978 (GGGSGGASGG…GSISTHPNTP (115 aa)). Positions 903–928 (HIPSGSSLLSSPPNRQGSTGSFSFIG) are enriched in low complexity. The span at 940 to 953 (NSSSLESPRTQSQL) shows a compositional bias: polar residues. The span at 960–972 (GSSPRSHSGGSIS) shows a compositional bias: low complexity. The pppA and pho2B binding stretch occupies residues 1000 to 1400 (FLDLTNEKLA…SIKKEGNLYN (401 aa)). A TPR 4 repeat occupies 1080-1113 (TQEVVRLVFVYYYLGIIQERLNFFSNNVGILGFV).

Component of the Sca1 complex composed of at least gefA, gefH, scaA, phr, and the protein phosphatase 2A subunits pppA and pho2B. Post-translationally, phosphorylated at Ser-359 by PKB and PKBR1 is induced by chemoattractant.

It localises to the cell membrane. Its function is as follows. Component of the Sca1 complex, a regulator of cell motility, chemotaxis and signal relay. The Sca1 complex is recruited to the plasma membrane in a chemoattractant- and F-actin-dependent manner and is enriched at the leading edge of chemotaxing cells where it regulates F-actin dynamics and signal relay by controlling the activation of rasC and the downstream target of rapamycin complex 2 (TORC2)-Akt/protein kinase B (PKB) pathway. ScaA acts as a molecular scaffold, bringing together gefA, gefH and phr with PP2A. The chain is Sca1 complex scaffold protein scaA from Dictyostelium discoideum (Social amoeba).